A 164-amino-acid chain; its full sequence is Succinate dehydrogenase assembly factor 3, mitochondrial (164 aa).

The N-terminal 51 residues, Met-1–Gly-51, are a transit peptide targeting the mitochondrion. Positions Lys-136 to Ala-145 are enriched in basic and acidic residues. A disordered region spans residues Lys-136–Ser-164. Residues Val-153–Ser-164 show a composition bias toward polar residues.

The protein belongs to the complex I LYR family. SDHAF3 subfamily. As to quaternary structure, interacts with the iron-sulfur protein subunit within the SDH catalytic dimer.

The protein localises to the mitochondrion matrix. In terms of biological role, plays an essential role in the assembly of succinate dehydrogenase (SDH), an enzyme complex (also referred to as respiratory complex II) that is a component of both the tricarboxylic acid (TCA) cycle and the mitochondrial electron transport chain, and which couples the oxidation of succinate to fumarate with the reduction of ubiquinone (coenzyme Q) to ubiquinol. Promotes maturation of the iron-sulfur protein subunit of the SDH catalytic dimer, protecting it from the deleterious effects of oxidants. May act together with SDHAF1. This chain is Succinate dehydrogenase assembly factor 3, mitochondrial, found in Cryptococcus neoformans var. neoformans serotype D (strain B-3501A) (Filobasidiella neoformans).